The primary structure comprises 156 residues: Small ribosomal subunit protein uS7 (156 aa).

It belongs to the universal ribosomal protein uS7 family. In terms of assembly, part of the 30S ribosomal subunit. Contacts proteins S9 and S11.

One of the primary rRNA binding proteins, it binds directly to 16S rRNA where it nucleates assembly of the head domain of the 30S subunit. Is located at the subunit interface close to the decoding center, probably blocks exit of the E-site tRNA. In Staphylococcus aureus (strain USA300), this protein is Small ribosomal subunit protein uS7.